Reading from the N-terminus, the 109-residue chain is MNINMLMQQAQRMQKDMESNIKKAKEELAQTEVHAEAGGGLVKVTMTGRYIVKRIEINPELLQDEPDMIEDLIAAAVNDAVRQAEVVSEEKMQKANSGMGLPPGLAGMF.

It belongs to the YbaB/EbfC family. As to quaternary structure, homodimer.

It localises to the cytoplasm. The protein localises to the nucleoid. Functionally, binds to DNA and alters its conformation. May be involved in regulation of gene expression, nucleoid organization and DNA protection. This chain is Nucleoid-associated protein A1S_1684, found in Acinetobacter baumannii (strain ATCC 17978 / DSM 105126 / CIP 53.77 / LMG 1025 / NCDC KC755 / 5377).